The sequence spans 405 residues: Imidazolonepropionase (405 aa).

Fe(3+) is bound by residues H73 and H75. The Zn(2+) site is built by H73 and H75. 4-imidazolone-5-propanoate contacts are provided by R82, Y145, and H178. Y145 lines the N-formimidoyl-L-glutamate pocket. A Fe(3+)-binding site is contributed by H243. H243 serves as a coordination point for Zn(2+). Q246 contacts 4-imidazolone-5-propanoate. D318 is a binding site for Fe(3+). D318 is a Zn(2+) binding site. Positions 320 and 322 each coordinate N-formimidoyl-L-glutamate. Position 323 (T323) interacts with 4-imidazolone-5-propanoate.

It belongs to the metallo-dependent hydrolases superfamily. HutI family. It depends on Zn(2+) as a cofactor. The cofactor is Fe(3+).

It is found in the cytoplasm. It catalyses the reaction 4-imidazolone-5-propanoate + H2O = N-formimidoyl-L-glutamate. It functions in the pathway amino-acid degradation; L-histidine degradation into L-glutamate; N-formimidoyl-L-glutamate from L-histidine: step 3/3. Catalyzes the hydrolytic cleavage of the carbon-nitrogen bond in imidazolone-5-propanoate to yield N-formimidoyl-L-glutamate. It is the third step in the universal histidine degradation pathway. This chain is Imidazolonepropionase, found in Brucella abortus (strain S19).